A 142-amino-acid chain; its full sequence is Sec-independent protein translocase protein TatB (142 aa).

A helical transmembrane segment spans residues 1–21 (MFDFGFSELVVIGVVMLIVVG). Positions 99-142 (AAPPDNTTSAESQAAADPAAVDSSQQLELRLDTTPKQVVGSDKA) are disordered. A compositionally biased stretch (low complexity) spans 107-124 (SAESQAAADPAAVDSSQQ).

Belongs to the TatB family. The Tat system comprises two distinct complexes: a TatABC complex, containing multiple copies of TatA, TatB and TatC subunits, and a separate TatA complex, containing only TatA subunits. Substrates initially bind to the TatABC complex, which probably triggers association of the separate TatA complex to form the active translocon.

Its subcellular location is the cell inner membrane. Its function is as follows. Part of the twin-arginine translocation (Tat) system that transports large folded proteins containing a characteristic twin-arginine motif in their signal peptide across membranes. Together with TatC, TatB is part of a receptor directly interacting with Tat signal peptides. TatB may form an oligomeric binding site that transiently accommodates folded Tat precursor proteins before their translocation. In Azoarcus sp. (strain BH72), this protein is Sec-independent protein translocase protein TatB.